A 260-amino-acid chain; its full sequence is Thiazole synthase (260 aa).

The active-site Schiff-base intermediate with DXP is Lys-96. 1-deoxy-D-xylulose 5-phosphate-binding positions include Gly-157, 184–185, and 206–207; these read AG and NT.

The protein belongs to the ThiG family. As to quaternary structure, homotetramer. Forms heterodimers with either ThiH or ThiS.

Its subcellular location is the cytoplasm. The enzyme catalyses [ThiS sulfur-carrier protein]-C-terminal-Gly-aminoethanethioate + 2-iminoacetate + 1-deoxy-D-xylulose 5-phosphate = [ThiS sulfur-carrier protein]-C-terminal Gly-Gly + 2-[(2R,5Z)-2-carboxy-4-methylthiazol-5(2H)-ylidene]ethyl phosphate + 2 H2O + H(+). It participates in cofactor biosynthesis; thiamine diphosphate biosynthesis. In terms of biological role, catalyzes the rearrangement of 1-deoxy-D-xylulose 5-phosphate (DXP) to produce the thiazole phosphate moiety of thiamine. Sulfur is provided by the thiocarboxylate moiety of the carrier protein ThiS. In vitro, sulfur can be provided by H(2)S. The polypeptide is Thiazole synthase (Nitrobacter winogradskyi (strain ATCC 25391 / DSM 10237 / CIP 104748 / NCIMB 11846 / Nb-255)).